The chain runs to 361 residues: D-alanine--D-alanine ligase (361 aa).

The region spanning 139–336 (KLLLKEKEIS…FSQIIDNMIN (198 aa)) is the ATP-grasp domain. Position 167–222 (167–222 (EKNLGYPMIVKPARLGSSIGVSKVVDRKNFEEAVKNVLLFDNKVLVEKWINAREIN)) interacts with ATP. Positions 296, 307, and 309 each coordinate Mg(2+).

The protein belongs to the D-alanine--D-alanine ligase family. Mg(2+) serves as cofactor. Mn(2+) is required as a cofactor.

Its subcellular location is the cytoplasm. It catalyses the reaction 2 D-alanine + ATP = D-alanyl-D-alanine + ADP + phosphate + H(+). It functions in the pathway cell wall biogenesis; peptidoglycan biosynthesis. Its function is as follows. Cell wall formation. The sequence is that of D-alanine--D-alanine ligase from Thermosipho melanesiensis (strain DSM 12029 / CIP 104789 / BI429).